The chain runs to 203 residues: Membrane-spanning 4-domains subfamily A member 13 (203 aa).

The next 4 helical transmembrane spans lie at 15-35 (VLGV…YFLL), 56-76 (MGTS…VKAA), 84-104 (ILCT…AASL), and 141-161 (FAIA…SSIV).

This sequence belongs to the MS4A family.

The protein resides in the membrane. Functionally, may be involved in signal transduction as a component of a multimeric receptor complex. This is Membrane-spanning 4-domains subfamily A member 13 (Ms4a13) from Mus musculus (Mouse).